The following is a 114-amino-acid chain: Fumarate reductase subunit D (114 aa).

3 consecutive transmembrane segments (helical) span residues 25–45, 50–70, and 94–114; these read SGLA…FGII, IIAF…TIFP, and LIFY…VIAI.

This sequence belongs to the FrdD family. As to quaternary structure, part of an enzyme complex containing four subunits: a flavoprotein (FrdA), an iron-sulfur protein (FrdB), and two hydrophobic anchor proteins (FrdC and FrdD).

The protein localises to the cell inner membrane. Functionally, anchors the catalytic components of the fumarate reductase complex to the cell membrane, binds quinones. The sequence is that of Fumarate reductase subunit D from Mannheimia succiniciproducens (strain KCTC 0769BP / MBEL55E).